Here is a 336-residue protein sequence, read N- to C-terminus: Neuropeptides B/W receptor type 2 (336 aa).

A disordered region spans residues 1-25; that stretch reads MMEATGLEGLESTSSPCPGSTGTGL. Topologically, residues 1-45 are extracellular; that stretch reads MMEATGLEGLESTSSPCPGSTGTGLSWDNGTRHNATFPEPLPALY. Low complexity predominate over residues 12–25; sequence STSSPCPGSTGTGL. 2 N-linked (GlcNAc...) asparagine glycosylation sites follow: N29 and N34. Residues 46–68 form a helical membrane-spanning segment; the sequence is VLLPVVYSVICAVGLVGNAAVIC. Topologically, residues 69 to 80 are cytoplasmic; sequence VILRAPKMKTVT. A helical transmembrane segment spans residues 81-103; it reads HVFILNLAIADGLFTLVLPTNIA. Residues 104-127 are Extracellular-facing; the sequence is EHLLQRWPFGEVLCKLVLAIDHCN. The cysteines at positions 117 and 197 are disulfide-linked. Residues 128–146 form a helical membrane-spanning segment; the sequence is IFSSVYFLAAMSIDRYLVV. Residues 147–165 are Cytoplasmic-facing; sequence LATARSRRMPRRTVHRAKV. A helical membrane pass occupies residues 166 to 188; it reads ASLCVWLGVTVAVLPFLTFAGVY. Over 189–213 the chain is Extracellular; that stretch reads NNELQVTSCGLSFPRPERAWFQASR. A helical transmembrane segment spans residues 214–236; it reads IYTLVLGFVVPMCTLCVLYADLL. The Cytoplasmic portion of the chain corresponds to 237-256; sequence RRLRALRLHSGAKALGKAKR. A helical transmembrane segment spans residues 257–279; sequence KVSLLVLAVLAVGLLCWTPFHLA. At 280–293 the chain is on the extracellular side; it reads SIVALTTDLPQTPL. Residues 294–316 traverse the membrane as a helical segment; that stretch reads VIIVSYVVTSLSYTSSCLNPFLY. The Cytoplasmic segment spans residues 317–336; that stretch reads AFLDHSFRKSLRTACRCQGA.

Belongs to the G-protein coupled receptor 1 family.

The protein localises to the cell membrane. Interacts specifically with a number of opioid ligands. Receptor for neuropeptides B and W, which may be involved in neuroendocrine system regulation, food intake and the organization of other signals. This is Neuropeptides B/W receptor type 2 (NPBWR2) from Bos taurus (Bovine).